Reading from the N-terminus, the 1196-residue chain is MSVMEPLSANRTAQFRTLEREARFVSPPKDKSAYPLLYEAVEPHVGSFNALTEGPGGGLLNLGARDIGAKVVFDGKASDENPNYLGNKLALSVTQVSLTKPMSNDGVTAAAERNVFPAEARKRLTTYRGKLLLKLNWSVNDGEETFSEVRDCGPLPVMLQSNRCHLHKMSPQELVEHKEESDELGGYFIVNGIEKLIRMLIVQRRNHPMAIIRPSFANRGTSYSHYGVQIRCVRPDQTSQTNVLHYLNDGQVTFRFSWRKNEYLVPVVLILKALTDASDREIFDGIVGADTSNSFLTDRLELLLRGFKKRFPQLLNRRQVLQYLGDKFRVVLQASPDMSDYLVGQELLRRIVLVHLGDENTDKSNMLMFMIRKLYSLVAGECCPDNPDATQHQEVLLGGFLYGMIVKEKIEEYLQNIKLQIQADVNRGMPVDFKDRKYMTRVLTRINENIGSKLQYFLSTGNLVSQSGLDLQQVSGYTVVAEKINFYRFISHFRMVHRGSFFAQLKTTTVRKLLPESWGFLCPVHTPDGSPCGLLNHFAHKCKISTTQSDVSKIPTLLYSLGVSPAAHVTAAGPSLCCVQLDGKIVGWCSHEQGRIVADTLRYWKVEGKTDGLPLDLEIGYVPASKRGQYPGLYLFGGHSRMMRPVRYLPLDKQDIVGPFEQVYMDIAVTPEEIQNNVHTHVEFSPTNILSILANLTPFSDFNQSPRNMYQCQMGKQTMGTPGVALCHRSDNKLYRLQSGQTPIVKANLYDDYGMDNFPNGTNAVVAVISYTGYDMDDAMIINKSADERGFSYGTVYKTEKIDLSLSRGRGDPVTQHFGFGTDEWPKEWLEKLDEDGLPIIGSYVEEGDPICAYFDDTLNKTKIKTYHSSEPAYIEEVTLIGDESNKFQELQYITIKYRIRRVPQIGDKFSSRHGQKGVCSRKWPTVDMPFSETGIQPDVIINPHAFPSRMTIGMFVESLAGKAGALHGIAQDATPWTFSEEDTPADYFGDQLLKAGYNYHGNEPMYSGATGEELRADIYIGVVYYQRLRHMVNDKFQVRSTGPVNSLTMQPVKGRKRHGGIRVGEMERDALIGHGTSFLLQDRLLNSSDYTQSAVCRECGSILTTQSSVPKIGSMVTIRCRRCAISFDEAKKIITQQDSEDSIFIDDSHIWEDGQGNKFVGGGNTTTVAIPFVLKYLDSELAAMGIRLRYNVDPK.

The C4-type zinc-finger motif lies at 1097–1124 (CRECGSILTTQSSVPKIGSMVTIRCRRC).

This sequence belongs to the RNA polymerase beta chain family. As to quaternary structure, component of the RNA polymerase I (Pol I) complex consisting of 14 subunits.

The protein localises to the nucleus. Its subcellular location is the nucleolus. The catalysed reaction is RNA(n) + a ribonucleoside 5'-triphosphate = RNA(n+1) + diphosphate. DNA-dependent RNA polymerase catalyzes the transcription of DNA into RNA using the four ribonucleoside triphosphates as substrates. Second largest core component of RNA polymerase I which synthesizes ribosomal RNA precursors. Proposed to contribute to the polymerase catalytic activity and forms the polymerase active center together with the largest subunit. Pol I is composed of mobile elements and RPA2 is part of the core element with the central large cleft and probably a clamp element that moves to open and close the cleft. The chain is DNA-directed RNA polymerase I subunit RPA2 (RPA2) from Eremothecium gossypii (strain ATCC 10895 / CBS 109.51 / FGSC 9923 / NRRL Y-1056) (Yeast).